The primary structure comprises 544 residues: Shootin-1 (544 aa).

Coiled coils occupy residues 17 to 100, 141 to 184, and 259 to 349; these read SNQV…LKRK, IVIT…EKHD, and EALQ…QVSN. A disordered region spans residues 343 to 544; that stretch reads KLQQVSNPPT…TTTICTEQLS (202 aa). Positions 352–371 are enriched in pro residues; that stretch reads TAAPAPPPPPPPPPPPPPPS. Over residues 372–383 the composition is skewed to low complexity; sequence SSSSNPLSSLLS. Residues 397–412 show a composition bias toward basic and acidic residues; it reads LVEKDSSEKSPEKDVR. Over residues 469-479 the composition is skewed to pro residues; it reads SSSPGPRPPSP. Residues 480-504 are a coiled coil; sequence SEKSELEKALQRRREAVKSAKNNTN. Residues 481 to 497 show a composition bias toward basic and acidic residues; sequence EKSELEKALQRRREAVK. The span at 499-544 shows a compositional bias: polar residues; the sequence is AKNNTNPSSVVDLTQIKQTRSEPGQNTGDQETLRHTTTTICTEQLS.

It belongs to the shootin family.

The protein localises to the perikaryon. The protein resides in the cell projection. It is found in the axon. It localises to the growth cone. Its subcellular location is the cytoplasm. The protein localises to the cytoskeleton. The protein resides in the filopodium. It is found in the lamellipodium. Its function is as follows. Involved in the generation of internal asymmetric signals required for neuronal polarization and neurite outgrowth. The sequence is that of Shootin-1 from Danio rerio (Zebrafish).